Here is a 195-residue protein sequence, read N- to C-terminus: 2-hydroxychromene-2-carboxylate isomerase (195 aa).

The Nucleophile role is filled by serine 13. Serine 13 provides a ligand contact to glutathione. Residues lysine 45 and 55-56 (NR) contribute to the substrate site. Residue 181 to 184 (WGND) participates in glutathione binding.

This sequence belongs to the GST superfamily. NadH family. It depends on glutathione as a cofactor.

It carries out the reaction 2-hydroxychromene-2-carboxylate = (3E)-4-(2-hydroxyphenyl)-2-oxobut-3-enoate. With respect to regulation, activated by salicylate. In terms of biological role, involved in the naphthalene and naphthalenesulfonate catabolic pathway. Catalyzes the reversible glutathione-dependent isomerization of 2-hydroxychromene-2-carboxylate (HCCA) to trans-O-hydroxybenzylidenepyruvate (THBPA). It can also use 2-hydroxybenzo[g]chromene-2-carboxylate as substrate. In Sphingobium xenophagum, this protein is 2-hydroxychromene-2-carboxylate isomerase (nsaD).